The chain runs to 153 residues: UPF0756 membrane protein Lm4b_01579 (153 aa).

4 consecutive transmembrane segments (helical) span residues 6–26, 54–74, 80–100, and 117–137; these read MLFLLLFLLLGLIAKNNSLII, WGVTIITVAILIPIATGQIGF, SFKSAAGWIGLGAGIAVSILA, and LVFGTILAVVLFRGIAAGPVI.

Belongs to the UPF0756 family.

The protein localises to the cell membrane. The sequence is that of UPF0756 membrane protein Lm4b_01579 from Listeria monocytogenes serotype 4b (strain CLIP80459).